A 1155-amino-acid polypeptide reads, in one-letter code: MIKRVHLGQGKAEEILDLPNLIEIQLNSYEKFLQLDRLKNNKPLLNEGLESVFRDVFPMKSSNGEVALEYEKYYVEYDSLSFTEKECKRKGQSYEAVLKIRLNLQFLTTGEIRQKDVYMGTIPLMTDRGTFIVNGAERVIVSQIHRSPGVVFYKEKDLYYARIIPYRGSWLEFEIDSKKDYLYVKIDRKKRILVTLFLRALGLDTREKIIETFYKIKKIEVNEDTKREITGQYLAVNITIKENMTYRAGDKITLQDIEDFLQNGVKEIDLIDFDGYDSVPGKHFISSDVILNCFEKEDAYFSLKDGFKELSRESVMLAVYSVLLPGEPISIDNAENDLRTVFFSEKRYDLGHVGRYKLSKKFGLNDLTTSVLTMTDIVNTISHLLRIYDGHDVLDDIDHLGNRRVRSVGELLTNIYKGAMSRVEKIAKDRMSNKEVFNLKPQELISVKPIVSAVKEFFATSQLSQFMDQVNPLAELTHKRRLNALGPGGLSRDRAGFEVRDVHYTHYGRMCPIETPEGPNIGLIVSLATYAKVNDYGFLETPYRKVINGKVTDEIEYLSAIDEEKKCIAQANAAVNAESNYIDDLISVRVSGDYTTMIPKNIDYMDVSPRQLISVSSALIPFLEHNDANRALMGSNMQRQAVPLLFPQPPIVGTGMERIVAKDSGVVIKAKRSGTVVLATSKRIVIRPDNADDEHDLDEYELAKYERTNQDTSFNHSVLIKEGQVVNKGEIIADGPATRYGELALGNNLLVGFIPWNGFNYEDAILISERIVKEDLYTSIHIKEFSIEVRETKLGPEKVTADIPNVSGKILNKLDENGIVRIGTYVKPGDILIGKVTPKSEGDITPEFKLLTSIFGEKAKDVKNNSLKVPHGTEGTVIDVQRITKNDVGNLPPGVDEILKVYVAKKRRLKEGDKMAGRHGNKGVVAKILPVEDMPYLADGTPLDICLNPLGVPSRMNIGQLMESQLGLAGKYLSEYYDVPVFESATNECIQEKLKKAGFNETSKAILYDGYTGEPFENEVMVGIIYMLKLHHLVDDKMHARSTGPYSLVSQQPLGGKAQFGGQRLGEMEVWALEAYGAAYTLQELLTVKSDDMSGRVKIYENIVKGIPTNVSGIPESFNVLMQELRGLGFDLSIYDDNGNQIPLTEKEEELINKT.

The protein belongs to the RNA polymerase beta chain family. In terms of assembly, the RNAP catalytic core consists of 2 alpha, 1 beta, 1 beta' and 1 omega subunit. When a sigma factor is associated with the core the holoenzyme is formed, which can initiate transcription.

It carries out the reaction RNA(n) + a ribonucleoside 5'-triphosphate = RNA(n+1) + diphosphate. Functionally, DNA-dependent RNA polymerase catalyzes the transcription of DNA into RNA using the four ribonucleoside triphosphates as substrates. This chain is DNA-directed RNA polymerase subunit beta, found in Borrelia turicatae (strain 91E135).